A 120-amino-acid chain; its full sequence is Large ribosomal subunit protein bL17 (120 aa).

The protein belongs to the bacterial ribosomal protein bL17 family. In terms of assembly, part of the 50S ribosomal subunit. Contacts protein L32.

In Mesomycoplasma hyopneumoniae (strain 232) (Mycoplasma hyopneumoniae), this protein is Large ribosomal subunit protein bL17.